The following is a 457-amino-acid chain: tRNA modification GTPase MnmE (457 aa).

3 residues coordinate (6S)-5-formyl-5,6,7,8-tetrahydrofolate: arginine 23, glutamate 85, and arginine 124. Positions 220 to 376 constitute a TrmE-type G domain; that stretch reads GALVVLAGQV…LVTAIRAAVL (157 aa). Residue asparagine 230 coordinates K(+). GTP contacts are provided by residues 230-235, 249-255, and 274-277; these read NAGKSS, TDLPGTT, and DTAG. Serine 234 provides a ligand contact to Mg(2+). The K(+) site is built by threonine 249, leucine 251, and threonine 254. Threonine 255 is a binding site for Mg(2+). (6S)-5-formyl-5,6,7,8-tetrahydrofolate is bound at residue lysine 457.

The protein belongs to the TRAFAC class TrmE-Era-EngA-EngB-Septin-like GTPase superfamily. TrmE GTPase family. As to quaternary structure, homodimer. Heterotetramer of two MnmE and two MnmG subunits. It depends on K(+) as a cofactor.

Its subcellular location is the cytoplasm. Its function is as follows. Exhibits a very high intrinsic GTPase hydrolysis rate. Involved in the addition of a carboxymethylaminomethyl (cmnm) group at the wobble position (U34) of certain tRNAs, forming tRNA-cmnm(5)s(2)U34. This is tRNA modification GTPase MnmE from Nitratidesulfovibrio vulgaris (strain DP4) (Desulfovibrio vulgaris).